We begin with the raw amino-acid sequence, 408 residues long: Aminoacylase-1 (408 aa).

Zn(2+) is bound at residue His76. Residue Asp78 is part of the active site. Asp109 is a binding site for Zn(2+). The Proton acceptor role is filled by Glu143. 3 residues coordinate Zn(2+): Glu144, Glu172, and His379.

This sequence belongs to the peptidase M20A family. In terms of assembly, homodimer. Zn(2+) serves as cofactor.

Its subcellular location is the cytoplasm. The catalysed reaction is an N-acyl-L-amino acid + H2O = an L-alpha-amino acid + a carboxylate. The enzyme catalyses an N-acetyl-L-cysteine-S-conjugate + H2O = an S-substituted L-cysteine + acetate. Involved in the hydrolysis of N-acylated or N-acetylated amino acids (except L-aspartate). This is Aminoacylase-1 (acy1) from Dictyostelium discoideum (Social amoeba).